The chain runs to 260 residues: Triosephosphate isomerase (260 aa).

11-13 provides a ligand contact to substrate; sequence NWK. Histidine 103 functions as the Electrophile in the catalytic mechanism. Catalysis depends on glutamate 175, which acts as the Proton acceptor. Substrate-binding positions include glycine 181, serine 220, and 241–242; that span reads GG.

It belongs to the triosephosphate isomerase family. Homodimer.

Its subcellular location is the cytoplasm. The catalysed reaction is D-glyceraldehyde 3-phosphate = dihydroxyacetone phosphate. The protein operates within carbohydrate biosynthesis; gluconeogenesis. It participates in carbohydrate degradation; glycolysis; D-glyceraldehyde 3-phosphate from glycerone phosphate: step 1/1. Functionally, involved in the gluconeogenesis. Catalyzes stereospecifically the conversion of dihydroxyacetone phosphate (DHAP) to D-glyceraldehyde-3-phosphate (G3P). The polypeptide is Triosephosphate isomerase (Shewanella woodyi (strain ATCC 51908 / MS32)).